The chain runs to 191 residues: MAEPLLVVGLGNPGENYARTRHNLGFMVADLLAARLGAKFKVHKRSGAEVVTGRLAQRSVVLAKPRCYMNESGRQVAPLAKFYSVPPADLIVIHDELDLDFGRIRLKFGGGEGGHNGLRSVAAALGTKNFQRVRIGIGRPPGRKDPATFVLENFSSPERPEVPTICEQAADATELLVEVGLEPAQNRVHAW.

TRNA is bound at residue tyrosine 17. Histidine 22 acts as the Proton acceptor in catalysis. TRNA is bound by residues tyrosine 68, asparagine 70, and asparagine 116.

It belongs to the PTH family. Monomer.

Its subcellular location is the cytoplasm. It carries out the reaction an N-acyl-L-alpha-aminoacyl-tRNA + H2O = an N-acyl-L-amino acid + a tRNA + H(+). Functionally, hydrolyzes ribosome-free peptidyl-tRNAs (with 1 or more amino acids incorporated), which drop off the ribosome during protein synthesis, or as a result of ribosome stalling. Catalyzes the release of premature peptidyl moieties from peptidyl-tRNA molecules trapped in stalled 50S ribosomal subunits, and thus maintains levels of free tRNAs and 50S ribosomes. This is Peptidyl-tRNA hydrolase from Mycobacterium ulcerans (strain Agy99).